The primary structure comprises 396 residues: Serine/threonine-protein kinase GRIK1 (396 aa).

Positions 22–65 (ERSRHSPNPYDDDTYSHDSGETSNPGGDDEEGEEEEEVEELSRS) are disordered. The segment covering 48–60 (GDDEEGEEEEEVE) has biased composition (acidic residues). The region spanning 108–369 (FVRERKIGSG…LKAVAEHPWI (262 aa)) is the Protein kinase domain. ATP contacts are provided by residues 114–122 (IGSGSYGKV) and Lys137. Thr154 carries the phosphothreonine; by autocatalysis modification. The Proton acceptor role is filled by Asp239. Ser261 bears the Phosphoserine; by KIN10 mark.

Belongs to the protein kinase superfamily. Ser/Thr protein kinase family. As to quaternary structure, associates with the SNF1-related protein kinase (SnRK) complex. Interacts with AL1, a geminivirus (TGMV) protein essential for viral replication. In terms of tissue distribution, expressed in shoot apical meristem, leaf primordium and emerging petiole (at protein level).

It is found in the cytoplasm. The protein localises to the nucleus. It carries out the reaction L-seryl-[protein] + ATP = O-phospho-L-seryl-[protein] + ADP + H(+). It catalyses the reaction L-threonyl-[protein] + ATP = O-phospho-L-threonyl-[protein] + ADP + H(+). Its activity is regulated as follows. Activated when autophosphorylated at Thr-154 and inactivated when phosphorylated at Ser-261 by SnRK1.1/KIN10. Functionally, activates SnRK1.1/KIN10 and SnRK1.2/KIN11 by phosphorylation of their activation-loop 'Thr-198' and 'Thr-176', respectively. Required for the regulation by SnRK1 kinases of the transcription of a large set of genes, the modification the activity of metabolic enzymes, and the control of various nutrient-responsive cellular developmental processes. This chain is Serine/threonine-protein kinase GRIK1 (GRIK1), found in Arabidopsis thaliana (Mouse-ear cress).